The primary structure comprises 454 residues: Nucleoprotein (454 aa).

The interval 1 to 62 (MSFVPGQENA…ATTQPNSGSV (62 aa)) is disordered. Over residues 11–21 (GSRSSSGSRSG) the composition is skewed to low complexity. The segment covering 49–61 (PKQTATTQPNSGS) has biased composition (polar residues). Residues 56 to 197 (QPNSGSVVPH…GFYVEGSGRS (142 aa)) are RNA-binding. Residues 64 to 193 (PHYSWFSGIT…VLPQGFYVEG (130 aa)) form the CoV N NTD domain. The RNA site is built by R109, R125, and R167. 3 disordered regions span residues 159–230 (KTTA…STVK), 249–292 (AGQP…KRGP), and 382–428 (DGGA…RELT). Residue S170 is modified to Phosphoserine; by host. A Phosphothreonine; by host modification is found at T177. Residues 193 to 212 (GSGRSAPASRSGSRSQSRGP) are compositionally biased toward low complexity. S194 carries the phosphoserine; by host modification. The segment covering 215 to 227 (RARSSSNQRQPAS) has biased composition (polar residues). Positions 260-383 (AKEVRQKILN…ENLNAYQKDG (124 aa)) constitute a CoV N CTD domain. Residues 267-277 (ILNKPRQKRTP) are compositionally biased toward basic residues. The dimerization stretch occupies residues 267–383 (ILNKPRQKRT…ENLNAYQKDG (117 aa)). S389 and S424 each carry phosphoserine; by host. T428 carries the post-translational modification Phosphothreonine; by host.

The protein belongs to the betacoronavirus nucleocapsid protein family. As to quaternary structure, homooligomer. Both monomeric and oligomeric forms interact with RNA. Interacts with protein M. Interacts with NSP3; this interaction serves to tether the genome to the newly translated replicase-transcriptase complex at a very early stage of infection. ADP-ribosylated. The ADP-ribosylation is retained in the virion during infection. Post-translationally, phosphorylated on serine and threonine residues.

The protein resides in the virion. The protein localises to the host endoplasmic reticulum-Golgi intermediate compartment. Its subcellular location is the host Golgi apparatus. Its function is as follows. Packages the positive strand viral genome RNA into a helical ribonucleocapsid (RNP) and plays a fundamental role during virion assembly through its interactions with the viral genome and membrane protein M. Plays an important role in enhancing the efficiency of subgenomic viral RNA transcription as well as viral replication. This is Nucleoprotein from Murine coronavirus (strain S) (MHV-S).